The sequence spans 396 residues: Apolipoprotein A-IV (396 aa).

Positions 1-20 (MFLKAVVLTLALVAVAGARA) are cleaved as a signal peptide. Repeat copies occupy residues 33–54 (DYFSQLSNNAKEAVEHLQKSEL), 60–81 (ALFQDKLGEVNTYAGDLQKKLV), 82–103 (PFATELHERLAKDSEKLKEEIG), 115–136 (PHANEVSQKIGDNLRELQQRLE), 137–158 (PYADQLRTQVSTQAEQLRRQLT), 159–180 (PYAQRMERVLRENADSLQASLR), 181–202 (PHADELKAKIDQNVEELKGRLT), 203–224 (PYADEFKVKIDQTVEELRRSLA), 225–246 (PYAQDTQEKLNHQLEGLTFQMK), 247–268 (KNAEELKARISASAEELRQRLA), 269–286 (PLAEDVRGNLRGNTEGLQ), 287–308 (KSLAELGGHLDQQVEEFRRRVE), and 309–330 (PYGENFNKALVQQMEQLRQKLG). The interval 33–330 (DYFSQLSNNA…QMEQLRQKLG (298 aa)) is 13 X 22 AA approximate tandem repeats. Positions 361–396 (KESQDKTLSLPELEQQQEQQQEQQQEQVQMLAPLES) are disordered. Residues 374-389 (EQQQEQQQEQQQEQVQ) are compositionally biased toward low complexity.

It belongs to the apolipoprotein A1/A4/E family. Homodimer. Phosphorylation sites are present in the extracellular medium. As to expression, synthesized primarily in the intestine and secreted in plasma.

It is found in the secreted. In terms of biological role, may have a role in chylomicrons and VLDL secretion and catabolism. Required for efficient activation of lipoprotein lipase by ApoC-II; potent activator of LCAT. Apoa-IV is a major component of HDL and chylomicrons. The polypeptide is Apolipoprotein A-IV (Homo sapiens (Human)).